The following is a 164-amino-acid chain: Cold-inducible RNA-binding protein (164 aa).

One can recognise an RRM domain in the interval 6–84 (GKLFVGGLSF…RQIRVDQAGK (79 aa)). The interval 65 to 164 (AGMNGKTVDG…SYRDSYDSYG (100 aa)) is disordered. A compositionally biased stretch (gly residues) spans 93 to 118 (YRGGSSGGGRGFFRGGRGRGGGGYGG). Residues 155 to 164 (SYRDSYDSYG) show a composition bias toward basic and acidic residues.

Interacts with prmt1. Interacts with elavl1/elrA (via RRM3). Associates with ribosomes. Methylated on arginine residues within RGG motifs. Methylation by prmt1 promotes cytoplasmic accumulation.

It localises to the nucleus. Its subcellular location is the nucleoplasm. The protein resides in the cytoplasm. Cold-inducible mRNA binding protein. Acts cooperatively with elavl1/elrA to stabilize AU-rich element (ARE)-containing mRNAs by binding to them and inhibiting their deadenylation. Essential for embryonic gastrulation and neural development, acting to maintain the expression of a set of adhesion molecules, and cell movement during embryogenesis. Required for pronephros development. May play a role in hibernation. The sequence is that of Cold-inducible RNA-binding protein from Aquarana catesbeiana (American bullfrog).